The following is a 306-amino-acid chain: MLEVIFLGTGGIMPTKERNVPAIALKYGGEIILWDIGEGTLRQLDTTKLSPMKIEKIFITHFHGDHYLGLMSLIQTMTLWKRERPLYIYGPKYTFEFIQNYLKSGFFRPSFEIHIHELGETRLKFKDYEIWSFKVDHGIPALGYVFKENDKRGNFDVEKIRELGLKPGPWMKKLEIKGKIEINGKLIYLEDVTGEPKKGVKIVYTGDTEQCERIKLFSERADLLIHEATYLSREDKGDSYHSTVEEACETAKRAKVELLALFHRAPRYKYEEYVQEANKICEYKFIIPQDFDVVRLGEKYELSSLR.

His-61, His-63, Asp-65, His-66, His-137, Asp-207, and His-263 together coordinate Zn(2+). The active-site Proton acceptor is Asp-65.

This sequence belongs to the RNase Z family. In terms of assembly, homodimer. It depends on Zn(2+) as a cofactor.

The catalysed reaction is Endonucleolytic cleavage of RNA, removing extra 3' nucleotides from tRNA precursor, generating 3' termini of tRNAs. A 3'-hydroxy group is left at the tRNA terminus and a 5'-phosphoryl group is left at the trailer molecule.. In terms of biological role, zinc phosphodiesterase, which displays some tRNA 3'-processing endonuclease activity. Probably involved in tRNA maturation, by removing a 3'-trailer from precursor tRNA. In Thermococcus sibiricus (strain DSM 12597 / MM 739), this protein is Ribonuclease Z.